The primary structure comprises 331 residues: 2-isopropylmalate synthase (331 aa).

The Pyruvate carboxyltransferase domain occupies 1–80 (RDEVVRGRDV…YTRINTREIY (80 aa)). 3 residues coordinate Mn(2+): His-15, His-17, and Asn-51. The tract at residues 205 to 331 (QLEHVQFFSG…PSIEEVHRGV (127 aa)) is regulatory domain.

It belongs to the alpha-IPM synthase/homocitrate synthase family. LeuA type 1 subfamily. Homotetramer. Mn(2+) is required as a cofactor.

It localises to the cytoplasm. The enzyme catalyses 3-methyl-2-oxobutanoate + acetyl-CoA + H2O = (2S)-2-isopropylmalate + CoA + H(+). The protein operates within amino-acid biosynthesis; L-leucine biosynthesis; L-leucine from 3-methyl-2-oxobutanoate: step 1/4. Catalyzes the condensation of the acetyl group of acetyl-CoA with 3-methyl-2-oxobutanoate (2-oxoisovalerate) to form 3-carboxy-3-hydroxy-4-methylpentanoate (2-isopropylmalate). The polypeptide is 2-isopropylmalate synthase (Thermus thermophilus).